A 117-amino-acid chain; its full sequence is Large ribosomal subunit protein bL19 (117 aa).

This sequence belongs to the bacterial ribosomal protein bL19 family.

In terms of biological role, this protein is located at the 30S-50S ribosomal subunit interface and may play a role in the structure and function of the aminoacyl-tRNA binding site. In Halorhodospira halophila (strain DSM 244 / SL1) (Ectothiorhodospira halophila (strain DSM 244 / SL1)), this protein is Large ribosomal subunit protein bL19.